A 124-amino-acid chain; its full sequence is Large ribosomal subunit protein uL22 (124 aa).

The protein belongs to the universal ribosomal protein uL22 family. As to quaternary structure, part of the 50S ribosomal subunit.

This protein binds specifically to 23S rRNA; its binding is stimulated by other ribosomal proteins, e.g. L4, L17, and L20. It is important during the early stages of 50S assembly. It makes multiple contacts with different domains of the 23S rRNA in the assembled 50S subunit and ribosome. Functionally, the globular domain of the protein is located near the polypeptide exit tunnel on the outside of the subunit, while an extended beta-hairpin is found that lines the wall of the exit tunnel in the center of the 70S ribosome. In Campylobacter lari (strain RM2100 / D67 / ATCC BAA-1060), this protein is Large ribosomal subunit protein uL22.